Reading from the N-terminus, the 679-residue chain is Kelch-like protein diablo (679 aa).

Residues 1 to 48 (MGDLPGGGGGAAGGAGAAGGGGGGGNGAAGSSSSGGGASGSGGGGPGS) show a composition bias toward gly residues. The tract at residues 1-84 (MGDLPGGGGG…RLSHTSEKHP (84 aa)) is disordered. Residues 101 to 168 (CDVVLNVGGR…CYTAHIIVEE (68 aa)) form the BTB domain. Positions 203 to 305 (CLGIRAFADT…SPKFLVGTVG (103 aa)) constitute a BACK domain. 6 Kelch repeats span residues 352 to 398 (VLFA…VLND), 400 to 446 (LYAV…VLDG), 447 to 493 (FLYA…VLGG), 495 to 540 (LYAI…VFNN), 542 to 587 (IYAV…VVNG), and 588 to 634 (QLYA…VMRA). The tract at residues 643–679 (CDNNSSNNNNNNYNLKHQQQQPQQQQQQQQQQTQQQL) is disordered. Over residues 645-679 (NNSSNNNNNNYNLKHQQQQPQQQQQQQQQQTQQQL) the composition is skewed to low complexity.

It functions in the pathway protein modification; protein ubiquitination. Functionally, probable substrate-specific adapter of an E3 ubiquitin-protein ligase complex which mediates the ubiquitination and subsequent proteasomal degradation of target proteins. May have a role in synapse differentiation and growth. This Drosophila willistoni (Fruit fly) protein is Kelch-like protein diablo.